Here is a 475-residue protein sequence, read N- to C-terminus: D(1B) dopamine receptor (475 aa).

The Extracellular portion of the chain corresponds to 1–38 (MLPPGRNRTAQPARLGLQRQLAQVDAPAGSATPLGPAQ). Asparagine 7 carries N-linked (GlcNAc...) asparagine glycosylation. Residues 39-64 (VVTAGLLTLLIVWTLLGNVLVCAAIV) traverse the membrane as a helical segment. At 65-75 (RSRHLRAKMTN) the chain is on the cytoplasmic side. The helical transmembrane segment at 76-102 (IFIVSLAVSDLFVALLVMPWKAVAEVA) threads the bilayer. The Extracellular segment spans residues 103-111 (GYWPFGTFC). Cysteine 111 and cysteine 211 form a disulfide bridge. A helical membrane pass occupies residues 112-134 (DIWVAFDIMCSTASILNLCIISV). The Cytoplasmic segment spans residues 135-153 (DRYWAISRPFRYERKMTQR). Residues 154–179 (VALVMVGLAWTLSILISFIPVQLNWH) traverse the membrane as a helical segment. Over 180–215 (RDKAGSQGQEGLLSNGTPWEEGWELEGRTENCDSSL) the chain is Extracellular. The chain crosses the membrane as a helical span at residues 216-240 (NRTYAISSSLISFYIPVAIMIVTYT). The Cytoplasmic portion of the chain corresponds to 241 to 289 (RIYRIAQVQIRRISSLERAAEHAQSCRSRGAYEPDPSLRASIKKETKVF). A helical transmembrane segment spans residues 290-317 (KTLSMIMGVFVCCWLPFFILNCMVPFCS). At 318–335 (SGDAEGPKTGFPCVSETT) the chain is on the extracellular side. Residues 336-357 (FDIFVWFGWANSSLNPIIYAFN) traverse the membrane as a helical segment. Over 358-475 (ADFRKVFAQL…LTPNCFDKTA (118 aa)) the chain is Cytoplasmic. The S-palmitoyl cysteine moiety is linked to residue cysteine 370. Residues 415–443 (SGDREVGEEEEEGPFDHMSQISPTTPDGD) form a disordered region.

It belongs to the G-protein coupled receptor 1 family. Brain, in the lateral mammillary nuclei, the anterior pretectal nuclei, and several layers of the hippocampus.

The protein localises to the cell membrane. Its function is as follows. Dopamine receptor whose activity is mediated by G proteins which activate adenylyl cyclase. The protein is D(1B) dopamine receptor (Drd5) of Rattus norvegicus (Rat).